We begin with the raw amino-acid sequence, 176 residues long: Large ribosomal subunit protein uL6 (176 aa).

This sequence belongs to the universal ribosomal protein uL6 family. Part of the 50S ribosomal subunit.

This protein binds to the 23S rRNA, and is important in its secondary structure. It is located near the subunit interface in the base of the L7/L12 stalk, and near the tRNA binding site of the peptidyltransferase center. The protein is Large ribosomal subunit protein uL6 of Paraburkholderia phytofirmans (strain DSM 17436 / LMG 22146 / PsJN) (Burkholderia phytofirmans).